Consider the following 412-residue polypeptide: MHIFNFLLFYPIFMSIYWIVGSIYYFFIKEKPFNRLLLVKSEHQQVEGISFLLACYNESETVQDTLSSVLSLEYPEKEIIIINDGSSDNTAEIIYEFKKNHDFKFVDLEVNRGKANALNEGIKQASYEYVMCLDADTVIDDDAPFYMIEDFKKNPKLGAVTGNPRIRNKSSILGKIQTIEYASIIGCIKRSQSLAGAINTISGVFTLFKKSALKDVGYWDTDMITEDIAVSWKLHLFDYEIKYEPRALCWMLVPETIGGLWKQRVRWAQGGHEVLLRDFWSTIKTKKLSLYILMFEQIASITWVYIVICYLSFLVITANILDYTYLKYSFSIFFFSSFTMTFINIIQFTVALFIDSRYEKKNIVGLIFLSWYPTLYWVINAAVVIMAFPKALKRKKGGYATWSSPDRGNIQR.

Helical transmembrane passes span 7-28, 298-320, 332-354, and 364-386; these read LLFY…YFFI, IASI…TANI, IFFF…ALFI, and VGLI…VVIM.

Belongs to the glycosyltransferase 2 family.

The protein resides in the cell membrane. In terms of biological role, N-acetylglucosaminyltransferase that catalyzes the polymerization of single monomer units of UDP-N-acetylglucosamine to produce the linear homomer poly-beta-1,6-N-acetyl-D-glucosamine (PNAG, also referred to as PIA), a biofilm adhesin polysaccharide. Requires IcaD for full activity. This chain is Poly-beta-1,6-N-acetyl-D-glucosamine synthase (icaA), found in Staphylococcus epidermidis.